A 289-amino-acid polypeptide reads, in one-letter code: 4-hydroxy-tetrahydrodipicolinate synthase (289 aa).

T44 provides a ligand contact to pyruvate. Y130 acts as the Proton donor/acceptor in catalysis. K158 (schiff-base intermediate with substrate) is an active-site residue. I200 is a binding site for pyruvate.

This sequence belongs to the DapA family. In terms of assembly, homotetramer; dimer of dimers.

Its subcellular location is the cytoplasm. It carries out the reaction L-aspartate 4-semialdehyde + pyruvate = (2S,4S)-4-hydroxy-2,3,4,5-tetrahydrodipicolinate + H2O + H(+). It functions in the pathway amino-acid biosynthesis; L-lysine biosynthesis via DAP pathway; (S)-tetrahydrodipicolinate from L-aspartate: step 3/4. Functionally, catalyzes the condensation of (S)-aspartate-beta-semialdehyde [(S)-ASA] and pyruvate to 4-hydroxy-tetrahydrodipicolinate (HTPA). This is 4-hydroxy-tetrahydrodipicolinate synthase from Archaeoglobus fulgidus (strain ATCC 49558 / DSM 4304 / JCM 9628 / NBRC 100126 / VC-16).